The following is a 453-amino-acid chain: Gamma-aminobutyric acid receptor subunit alpha-6 (453 aa).

Positions 1–19 (MVLLLPWLFIILWLENAQA) are cleaved as a signal peptide. Residues 20 to 243 (QLEDEGNFYS…FHLQRKMGYF (224 aa)) lie on the Extracellular side of the membrane. A glycan (N-linked (GlcNAc...) asparagine) is linked at Asn31. Arg84 provides a ligand contact to 4-aminobutanoate. 2 N-linked (GlcNAc...) asparagine glycosylation sites follow: Asn128 and Asn141. Thr147 provides a ligand contact to 4-aminobutanoate. Cysteines 156 and 170 form a disulfide. A helical membrane pass occupies residues 244–264 (MIQIYTPCIMTVILSQVSFWI). The Cytoplasmic portion of the chain corresponds to 265–270 (NKESVP). The chain crosses the membrane as a helical span at residues 271-290 (ARTVFGITTVLTMTTLSISA). The Extracellular segment spans residues 291–304 (RHSLPKVSYATAMD). A helical membrane pass occupies residues 305–325 (WFIAVCFAFVFSALIEFAAVN). The Cytoplasmic segment spans residues 326-422 (YFTNLQSQKA…GTSKIDQYSR (97 aa)). The residue at position 375 (Ser375) is a Phosphoserine. Residues 423–443 (ILFPVAFAGFNLVYWIVYLSK) form a helical membrane-spanning segment. The Extracellular segment spans residues 444 to 453 (DTMEVSSTVE).

It belongs to the ligand-gated ion channel (TC 1.A.9) family. Gamma-aminobutyric acid receptor (TC 1.A.9.5) subfamily. GABRA6 sub-subfamily. In terms of assembly, heteropentamer, formed by a combination of alpha (GABRA1-6), beta (GABRB1-3), gamma (GABRG1-3), delta (GABRD), epsilon (GABRE), rho (GABRR1-3), pi (GABRP) and theta (GABRQ) chains, each subunit exhibiting distinct physiological and pharmacological properties. Binds UBQLN1. Expressed in brain, in cerebellar granule cells.

It is found in the postsynaptic cell membrane. Its subcellular location is the cell membrane. It carries out the reaction chloride(in) = chloride(out). Its function is as follows. Alpha subunit of the heteropentameric ligand-gated chloride channel gated by gamma-aminobutyric acid (GABA), a major inhibitory neurotransmitter in the brain. GABA-gated chloride channels, also named GABA(A) receptors (GABAAR), consist of five subunits arranged around a central pore and contain GABA active binding site(s) located at the alpha and beta subunit interface(s). When activated by GABA, GABAARs selectively allow the flow of chloride anions across the cell membrane down their electrochemical gradient. Alpha-6/GABRA6 subunits are found at both synaptic and extrasynaptic sites. Chloride influx into the postsynaptic neuron following GABAAR opening decreases the neuron ability to generate a new action potential, thereby reducing nerve transmission. Extrasynaptic alpha-6-containing receptors contribute to the tonic GABAergic inhibition. Alpha-6 subunits are also present on glutamatergic synapses. The chain is Gamma-aminobutyric acid receptor subunit alpha-6 from Mus musculus (Mouse).